The sequence spans 24 residues: Caerulein precursor fragment BM1 (24 aa).

As to expression, expressed by the skin glands.

It is found in the secreted. Antimicrobial peptide. The chain is Caerulein precursor fragment BM1 from Xenopus boumbaensis (Mawa clawed frog).